A 296-amino-acid chain; its full sequence is MNPKSPLFLRLSDRLDVYLRLMRADKPIGTLLLLWPTYWALWLASDGIPDLAVLAAFTIGTFLMRSAGCVINDFADRDFDGAVERTKNRPFAQGRVKKKEALLLTAFLCLLAALCLIPLNHLTWLMSLPALFLALTYPFTKRFFPIPQLYLGLAFSFGIPMAFAAVAGNVPPQAWILFAANVLWTLAYDTVYAMADKEDDLKIGIKTSAVTFGRYDIAAVMLCHGGFTLLMAVLGAVIGAAWAYWTAIPIVLLLQYRQYAAIKSRVRQICFETFLANNRIGWVWFTAIFAHTFFAK.

A run of 8 helical transmembrane segments spans residues 28 to 48 (IGTL…SDGI), 51 to 71 (LAVL…GCVI), 102 to 122 (LLLT…LNHL), 143 to 163 (FFPI…PMAF), 174 to 194 (AWIL…VYAM), 212 to 232 (FGRY…LLMA), 233 to 253 (VLGA…IVLL), and 274 to 294 (FLAN…HTFF).

Belongs to the UbiA prenyltransferase family. Requires Mg(2+) as cofactor.

It localises to the cell inner membrane. The enzyme catalyses all-trans-octaprenyl diphosphate + 4-hydroxybenzoate = 4-hydroxy-3-(all-trans-octaprenyl)benzoate + diphosphate. It participates in cofactor biosynthesis; ubiquinone biosynthesis. In terms of biological role, catalyzes the prenylation of para-hydroxybenzoate (PHB) with an all-trans polyprenyl group. Mediates the second step in the final reaction sequence of ubiquinone-8 (UQ-8) biosynthesis, which is the condensation of the polyisoprenoid side chain with PHB, generating the first membrane-bound Q intermediate 3-octaprenyl-4-hydroxybenzoate. In Neisseria meningitidis serogroup B (strain ATCC BAA-335 / MC58), this protein is 4-hydroxybenzoate octaprenyltransferase.